Here is a 479-residue protein sequence, read N- to C-terminus: Ribosomal RNA small subunit methyltransferase F (479 aa).

Residues 125–131, glutamate 149, aspartate 176, and aspartate 194 contribute to the S-adenosyl-L-methionine site; that span reads AAAPGSK. The active-site Nucleophile is cysteine 247.

It belongs to the class I-like SAM-binding methyltransferase superfamily. RsmB/NOP family.

The protein localises to the cytoplasm. It catalyses the reaction cytidine(1407) in 16S rRNA + S-adenosyl-L-methionine = 5-methylcytidine(1407) in 16S rRNA + S-adenosyl-L-homocysteine + H(+). Functionally, specifically methylates the cytosine at position 1407 (m5C1407) of 16S rRNA. The sequence is that of Ribosomal RNA small subunit methyltransferase F from Salmonella newport (strain SL254).